The primary structure comprises 2118 residues: Separin (2118 aa).

S1121 is modified (phosphoserine). Positions 1309 to 1318 (KCSGRGRRRI) are enriched in basic residues. Positions 1309–1352 (KCSGRGRRRIASVPPPLHNSSQKGLEEEGPPCTPKPPGRARQAG) are disordered. Residues S1391 and S1394 each carry the phosphoserine modification. The tract at residues 1408 to 1428 (EEPKRRGTASRTRGQTRKGRS) is disordered. S1504 carries the post-translational modification Phosphoserine. One can recognise a Peptidase C50 domain in the interval 1941–2036 (PQNTFYVLNP…SAALAVHGNL (96 aa)). C2025 is an active-site residue.

Interacts with PTTG1. Interacts with RAD21. Autocleaves. This function, which is not essential for its protease activity, is unknown. Post-translationally, phosphorylated by CDK1. There is 8 Ser/Thr phosphorylation sites. Among them, only Ser-1121 phosphorylation is the major site, which conducts to the enzyme inactivation.

The protein resides in the cytoplasm. It is found in the nucleus. The enzyme catalyses All bonds known to be hydrolyzed by this endopeptidase have arginine in P1 and an acidic residue in P4. P6 is often occupied by an acidic residue or by a hydroxy-amino-acid residue, the phosphorylation of which enhances cleavage.. With respect to regulation, regulated by at least two independent mechanisms. First, it is inactivated via its interaction with securin/PTTG1, which probably covers its active site. The association with PTTG1 is not only inhibitory, since PTTG1 is also required for activating it, the enzyme being inactive in cells in which PTTG1 is absent. PTTG1 degradation at anaphase, liberates it and triggers RAD21 cleavage. Second, phosphorylation at Ser-1121 inactivates it. The complete phosphorylation during mitosis, is removed when cells undergo anaphase. Activation of the enzyme at the metaphase-anaphase transition probably requires the removal of both securin and inhibitory phosphate. In terms of biological role, caspase-like protease, which plays a central role in the chromosome segregation by cleaving the SCC1/RAD21 subunit of the cohesin complex at the onset of anaphase. During most of the cell cycle, it is inactivated by different mechanisms. This is Separin (Espl1) from Mus musculus (Mouse).